Consider the following 1079-residue polypeptide: Integrator complex subunit 3 homolog (1079 aa).

3 disordered regions span residues glutamate 544–proline 574, tyrosine 925–alanine 949, and alanine 1010–aspartate 1079. Residues lysine 938–alanine 949 are compositionally biased toward low complexity. Phosphoserine occurs at positions 1049, 1050, 1054, and 1055. Basic residues predominate over residues histidine 1062 to lysine 1073.

Belongs to the Integrator subunit 3 family. Belongs to the multiprotein complex Integrator, at least composed of IntS1, IntS2, IntS3, IntS4, omd/IntS5, IntS6, defl/IntS7, IntS8, IntS9, IntS10, IntS11, IntS12, asun/IntS13, IntS14 and IntS15. The core complex associates with protein phosphatase 2A subunits mts/PP2A and Pp2A-29B, to form the Integrator-PP2A (INTAC) complex.

The protein localises to the nucleus. It localises to the cytoplasm. Functionally, component of the integrator complex, a multiprotein complex that terminates RNA polymerase II (Pol II) transcription in the promoter-proximal region of genes. The integrator complex provides a quality checkpoint during transcription elongation by driving premature transcription termination of transcripts that are unfavorably configured for transcriptional elongation: the complex terminates transcription by (1) catalyzing dephosphorylation of the C-terminal domain (CTD) of Pol II subunit Polr2A/Rbp1 and Spt5, and (2) degrading the exiting nascent RNA transcript via endonuclease activity. The integrator complex is also involved in the 3'-end processing of the U7 snRNA, and also the spliceosomal snRNAs U1, U2, U4 and U5. The protein is Integrator complex subunit 3 homolog (IntS3) of Drosophila mojavensis (Fruit fly).